A 95-amino-acid chain; its full sequence is Protein TusB (95 aa).

It belongs to the DsrH/TusB family. Heterohexamer, formed by a dimer of trimers. The hexameric TusBCD complex contains 2 copies each of TusB, TusC and TusD. The TusBCD complex interacts with TusE.

It is found in the cytoplasm. Part of a sulfur-relay system required for 2-thiolation of 5-methylaminomethyl-2-thiouridine (mnm(5)s(2)U) at tRNA wobble positions. In Shigella dysenteriae serotype 1 (strain Sd197), this protein is Protein TusB.